The primary structure comprises 1049 residues: Dyslexia-associated protein KIAA0319-like protein (1049 aa).

Residues 1–29 are Cytoplasmic-facing; that stretch reads MEKRLGVKPNPASWILSGYYWQTSAKWLR. The helical transmembrane segment at 30-50 threads the bilayer; sequence SLYLFYTCFCFSVLWLSTDAS. The region spanning 49 to 127 is the MANSC domain; sequence ASESRCQQGK…AFRTHSSNSM (79 aa). Over 51 to 932 the chain is Extracellular; that stretch reads ESRCQQGKTQ…DSNCEWSVLY (882 aa). Residues N247, N395, N472, N487, and N525 are each glycosylated (N-linked (GlcNAc...) asparagine). PKD domains lie at 312 to 401, 409 to 498, 504 to 594, 600 to 688, and 694 to 785; these read SAGE…VKPE, IAIV…VNKA, VANA…VQPE, QADA…VKEE, and IAKI…VKPD. A helical membrane pass occupies residues 933–953; the sequence is VIIATFVIVVALGILSWTVIC. The Cytoplasmic segment spans residues 954–1049; sequence CCKRQKGKPK…KARSPREEIL (96 aa). Position 974 is a phosphothreonine (T974). Phosphoserine occurs at positions 978, 1009, and 1031. The interval 1022–1049 is disordered; it reads GKLLHGQNGSVPNGQTPLKARSPREEIL. Residues 1028-1037 are compositionally biased toward polar residues; it reads QNGSVPNGQT. T1037 bears the Phosphothreonine mark.

Interacts with RTN4R. As to quaternary structure, (Microbial infection) Interacts with AAV-2 VP1. In terms of processing, N-glycosylated. In terms of tissue distribution, expressed in cortical neurons in the brain cortex (at protein level).

Its subcellular location is the cytoplasmic granule membrane. The protein localises to the golgi apparatus membrane. It is found in the golgi apparatus. The protein resides in the trans-Golgi network membrane. It localises to the cell membrane. In terms of biological role, possible role in axon guidance through interaction with RTN4R. Its function is as follows. (Microbial infection) Acts as a receptor for adeno-associated virus and is involved in adeno-associated virus infection through endocytosis system. This chain is Dyslexia-associated protein KIAA0319-like protein, found in Homo sapiens (Human).